The primary structure comprises 517 residues: Putative thymidine phosphorylase (517 aa).

It belongs to the thymidine/pyrimidine-nucleoside phosphorylase family. Type 2 subfamily.

The catalysed reaction is thymidine + phosphate = 2-deoxy-alpha-D-ribose 1-phosphate + thymine. In Legionella pneumophila subsp. pneumophila (strain Philadelphia 1 / ATCC 33152 / DSM 7513), this protein is Putative thymidine phosphorylase.